A 378-amino-acid polypeptide reads, in one-letter code: Probable 3-hydroxyisobutyryl-CoA hydrolase 2 (378 aa).

Positions 115, 138, and 146 each coordinate substrate. Positions 376-378 (AKL) match the Microbody targeting signal motif.

Belongs to the enoyl-CoA hydratase/isomerase family.

Its subcellular location is the peroxisome. The enzyme catalyses 3-hydroxy-2-methylpropanoyl-CoA + H2O = 3-hydroxy-2-methylpropanoate + CoA + H(+). It functions in the pathway amino-acid degradation; L-valine degradation. In terms of biological role, involved in valine catabolism. This is Probable 3-hydroxyisobutyryl-CoA hydrolase 2 from Arabidopsis thaliana (Mouse-ear cress).